The primary structure comprises 431 residues: Enolase (431 aa).

(2R)-2-phosphoglycerate is bound at residue Gln166. Residue Glu208 is the Proton donor of the active site. Mg(2+)-binding residues include Asp245, Glu289, and Asp316. Lys341, Arg370, Ser371, and Lys392 together coordinate (2R)-2-phosphoglycerate. Residue Lys341 is the Proton acceptor of the active site.

Belongs to the enolase family. The cofactor is Mg(2+).

The protein resides in the cytoplasm. It localises to the secreted. The protein localises to the cell surface. The catalysed reaction is (2R)-2-phosphoglycerate = phosphoenolpyruvate + H2O. The protein operates within carbohydrate degradation; glycolysis; pyruvate from D-glyceraldehyde 3-phosphate: step 4/5. Catalyzes the reversible conversion of 2-phosphoglycerate (2-PG) into phosphoenolpyruvate (PEP). It is essential for the degradation of carbohydrates via glycolysis. The chain is Enolase from Ruminiclostridium cellulolyticum (strain ATCC 35319 / DSM 5812 / JCM 6584 / H10) (Clostridium cellulolyticum).